A 509-amino-acid polypeptide reads, in one-letter code: Maturase K (509 aa).

The protein belongs to the intron maturase 2 family. MatK subfamily.

It is found in the plastid. The protein resides in the chloroplast. Usually encoded in the trnK tRNA gene intron. Probably assists in splicing its own and other chloroplast group II introns. This is Maturase K from Nicotiana sylvestris (Wood tobacco).